Reading from the N-terminus, the 360-residue chain is DNA replication and repair protein RecF (360 aa).

ATP is bound at residue 30–37 (GQNGSGKT).

It belongs to the RecF family.

The protein resides in the cytoplasm. The RecF protein is involved in DNA metabolism; it is required for DNA replication and normal SOS inducibility. RecF binds preferentially to single-stranded, linear DNA. It also seems to bind ATP. In Shewanella loihica (strain ATCC BAA-1088 / PV-4), this protein is DNA replication and repair protein RecF.